The chain runs to 139 residues: Cystatin-11 (139 aa).

Residues 1–28 form the signal peptide; the sequence is MAAGSWKATRLLLAILVALVAFSYQVKR. Intrachain disulfides connect Cys94–Cys102 and Cys115–Cys135. N-linked (GlcNAc...) asparagine glycosylation occurs at Asn134.

It belongs to the cystatin family. Expressed in epididymis, where it localizes to the proximal caput and also part of the midcaput. Not detected in other tissues tested.

It is found in the secreted. In terms of biological role, has antibacterial activity against the Gram-negative bacteria E.coli. May play a role in sperm maturation and fertilization. This chain is Cystatin-11, found in Mus musculus (Mouse).